The primary structure comprises 702 residues: MNSLFASTARGLEELLKTELENLGAVECQVVQGGVHFKGDTRLVYQSLMWSRLASRIMLPLGECKVYSDLDLYLGVQAINWTEMFNPGATFAVHFSGLNDTIRNSQYGAMKVKDAIVDAFTRKNLPRPNVDRDAPDIRVNVWLHKETASIALDLSGDGLHLRGYRDRAGMAPIKETLAAAIVMRSGWQPGTPLLDPMCGSGTLLIEAAMLATDRAPGLHRGRWGFSGWTQHDEAIWQEVKAEAQTRARKGLAEYSSHFFGSDSDARVIQRARTNARLAGIGELITFEVNDVAQLANPLPKGPYGTVLSNPPYGERLDSEPALIALHSLLGRIMKNQFGGWNLSLFSASPDLLSCLQLRADKQYKAKNGPLDCVQKNYHVAESTPDSKPVMAAEDYANRLRKNLKKFEKWARQEGIECYRLYDADLPEYNVAVDRYADWVVVQEYAPPKTIDAHKARQRLFDIIAATISVLGIAPNKLVLKTRERQKGKNQYQKLGEKGEFLEVTEYNAHLWVNLTDYLDTGLFLDHRIARRMLGQMSKGKDFLNLFSYTGSATVHAGLGGARSTTTVDMSRTYLEWAERNLRLNGLTGRAHRLIQADCLAWLREANEQFDLIFIDPPTFSNSKRMEDAFDVQRDHLALMKDLKRLLRAGGTIMFSNNKRGFRMDLDGLAKLGLKAQEITQKTLSQDFARNRQIHNCWLITAA.

A THUMP domain is found at 43 to 154 (LVYQSLMWSR…KETASIALDL (112 aa)).

Belongs to the methyltransferase superfamily. RlmKL family.

The protein localises to the cytoplasm. The enzyme catalyses guanosine(2445) in 23S rRNA + S-adenosyl-L-methionine = N(2)-methylguanosine(2445) in 23S rRNA + S-adenosyl-L-homocysteine + H(+). It catalyses the reaction guanosine(2069) in 23S rRNA + S-adenosyl-L-methionine = N(2)-methylguanosine(2069) in 23S rRNA + S-adenosyl-L-homocysteine + H(+). Specifically methylates the guanine in position 2445 (m2G2445) and the guanine in position 2069 (m7G2069) of 23S rRNA. The sequence is that of Ribosomal RNA large subunit methyltransferase K/L from Escherichia coli O1:K1 / APEC.